The following is a 299-amino-acid chain: Dihydroorotate dehydrogenase B (NAD(+)), catalytic subunit (299 aa).

FMN-binding positions include serine 19 and 43 to 44 (KS). Substrate contacts are provided by residues lysine 43, 67 to 71 (NAMGL), and asparagine 121. Asparagine 121 lines the FMN pocket. Catalysis depends on cysteine 124, which acts as the Nucleophile. Residues lysine 159 and isoleucine 185 each contribute to the FMN site. Residue 186 to 187 (NT) coordinates substrate. FMN contacts are provided by residues glycine 211, 237 to 238 (GG), and 259 to 260 (GT).

It belongs to the dihydroorotate dehydrogenase family. Type 1 subfamily. As to quaternary structure, heterotetramer of 2 PyrK and 2 PyrD type B subunits. The cofactor is FMN.

Its subcellular location is the cytoplasm. It catalyses the reaction (S)-dihydroorotate + NAD(+) = orotate + NADH + H(+). It participates in pyrimidine metabolism; UMP biosynthesis via de novo pathway; orotate from (S)-dihydroorotate (NAD(+) route): step 1/1. Its function is as follows. Catalyzes the conversion of dihydroorotate to orotate with NAD(+) as electron acceptor. This chain is Dihydroorotate dehydrogenase B (NAD(+)), catalytic subunit (pyrD), found in Pyrococcus abyssi (strain GE5 / Orsay).